We begin with the raw amino-acid sequence, 182 residues long: Large ribosomal subunit protein uL6 (182 aa).

Belongs to the universal ribosomal protein uL6 family. As to quaternary structure, part of the 50S ribosomal subunit.

This protein binds to the 23S rRNA, and is important in its secondary structure. It is located near the subunit interface in the base of the L7/L12 stalk, and near the tRNA binding site of the peptidyltransferase center. The protein is Large ribosomal subunit protein uL6 of Dehalococcoides mccartyi (strain ATCC BAA-2100 / JCM 16839 / KCTC 5957 / BAV1).